Reading from the N-terminus, the 322-residue chain is DNA-directed RNA polymerase subunit alpha (322 aa).

The alpha N-terminal domain (alpha-NTD) stretch occupies residues 1–229; it reads MNFVNNLFTL…KYFDLIFSFI (229 aa). The tract at residues 244-322 is alpha C-terminal domain (alpha-CTD); it reads NLNLKINSVY…NLNSKIEYDL (79 aa).

It belongs to the RNA polymerase alpha chain family. Homodimer. The RNAP catalytic core consists of 2 alpha, 1 beta, 1 beta' and 1 omega subunit. When a sigma factor is associated with the core the holoenzyme is formed, which can initiate transcription.

The catalysed reaction is RNA(n) + a ribonucleoside 5'-triphosphate = RNA(n+1) + diphosphate. Functionally, DNA-dependent RNA polymerase catalyzes the transcription of DNA into RNA using the four ribonucleoside triphosphates as substrates. This is DNA-directed RNA polymerase subunit alpha (rpoA) from Carsonella ruddii (strain PV).